The chain runs to 203 residues: Vexin (203 aa).

Positions 59 to 70 (HRTDRRDGEGRW) are enriched in basic and acidic residues. The tract at residues 59-101 (HRTDRRDGEGRWSGRFQNPRLQGPHPAKTPARPVGTSEPKSAN) is disordered.

This sequence belongs to the vexin family.

Its subcellular location is the cell membrane. The protein localises to the nucleus. In terms of biological role, required for neurogenesis in the neural plate and retina. Strongly cooperates with neural bHLH factors to promote neurogenesis. The protein is Vexin of Bos taurus (Bovine).